Consider the following 457-residue polypeptide: D-inositol 3-phosphate glycosyltransferase (457 aa).

Histidine 34 contacts 1D-myo-inositol 3-phosphate. UDP-N-acetyl-alpha-D-glucosamine is bound by residues 40 to 41 (QP) and glycine 48. 1D-myo-inositol 3-phosphate contacts are provided by residues 45-50 (DAGGMN), lysine 103, tyrosine 136, threonine 160, and arginine 180. Residues arginine 267, lysine 272, and valine 333 each coordinate UDP-N-acetyl-alpha-D-glucosamine. 3 residues coordinate Mg(2+): phenylalanine 342, arginine 343, and alanine 345. Positions 355 and 363 each coordinate UDP-N-acetyl-alpha-D-glucosamine. Mg(2+) is bound at residue threonine 369.

It belongs to the glycosyltransferase group 1 family. MshA subfamily. In terms of assembly, homodimer.

The catalysed reaction is 1D-myo-inositol 3-phosphate + UDP-N-acetyl-alpha-D-glucosamine = 1D-myo-inositol 2-acetamido-2-deoxy-alpha-D-glucopyranoside 3-phosphate + UDP + H(+). Catalyzes the transfer of a N-acetyl-glucosamine moiety to 1D-myo-inositol 3-phosphate to produce 1D-myo-inositol 2-acetamido-2-deoxy-glucopyranoside 3-phosphate in the mycothiol biosynthesis pathway. The sequence is that of D-inositol 3-phosphate glycosyltransferase from Streptomyces coelicolor (strain ATCC BAA-471 / A3(2) / M145).